A 201-amino-acid chain; its full sequence is NAD(P)H quinone oxidoreductase PST2 (201 aa).

The 187-residue stretch at V6–F192 folds into the Flavodoxin-like domain. FMN contacts are provided by residues S12–H16 and V112–G164.

The protein belongs to the WrbA family. The cofactor is FMN.

It localises to the cell membrane. The enzyme catalyses a quinone + NADH + H(+) = a quinol + NAD(+). It carries out the reaction a quinone + NADPH + H(+) = a quinol + NADP(+). Functionally, flavodoxin-like protein (FLP) that plays a role in cell wall integrity, oxidative stress protection and virulence. FLPs act as NAD(P)H quinone oxidoreductases. Reduces ubiquinone (coenzyme Q), enabling it to serve as an antioxidant in the membrane. The protein is NAD(P)H quinone oxidoreductase PST2 of Candida albicans (strain SC5314 / ATCC MYA-2876) (Yeast).